We begin with the raw amino-acid sequence, 1813 residues long: U3 small nucleolar RNA-associated protein 10 (1813 aa).

5 HEAT repeats span residues 245–283 (DVLI…KASL), 389–427 (SETI…LQFN), 428–464 (ESDT…DIMP), 584–621 (ADMQ…LASK), and 659–695 (IIHH…QDDS). Disordered stretches follow at residues 686–705 (IRGP…STGV) and 887–912 (DLGS…SSMD). Over residues 690-705 (RSQDDSDRTRSESTGV) the composition is skewed to basic and acidic residues. HEAT repeat units lie at residues 1058–1095 (QTID…AFEH), 1189–1228 (KIAV…KAHG), 1265–1302 (LSLV…SSND), 1309–1347 (ARVL…KYGK), 1398–1437 (EALP…HVPW), 1678–1715 (LASI…LAVA), and 1769–1806 (ALLP…ILGE).

This sequence belongs to the HEATR1/UTP10 family. Component of the ribosomal small subunit (SSU) processome.

The protein localises to the nucleus. It is found in the nucleolus. Functionally, involved in nucleolar processing of pre-18S ribosomal RNA. Involved in ribosome biosynthesis. The protein is U3 small nucleolar RNA-associated protein 10 of Coccidioides immitis (strain RS) (Valley fever fungus).